Consider the following 227-residue polypeptide: Leucyl/phenylalanyl-tRNA--protein transferase (227 aa).

This sequence belongs to the L/F-transferase family.

The protein localises to the cytoplasm. The enzyme catalyses N-terminal L-lysyl-[protein] + L-leucyl-tRNA(Leu) = N-terminal L-leucyl-L-lysyl-[protein] + tRNA(Leu) + H(+). It carries out the reaction N-terminal L-arginyl-[protein] + L-leucyl-tRNA(Leu) = N-terminal L-leucyl-L-arginyl-[protein] + tRNA(Leu) + H(+). The catalysed reaction is L-phenylalanyl-tRNA(Phe) + an N-terminal L-alpha-aminoacyl-[protein] = an N-terminal L-phenylalanyl-L-alpha-aminoacyl-[protein] + tRNA(Phe). In terms of biological role, functions in the N-end rule pathway of protein degradation where it conjugates Leu, Phe and, less efficiently, Met from aminoacyl-tRNAs to the N-termini of proteins containing an N-terminal arginine or lysine. The protein is Leucyl/phenylalanyl-tRNA--protein transferase of Desulfotalea psychrophila (strain LSv54 / DSM 12343).